Here is a 294-residue protein sequence, read N- to C-terminus: Probable cobalamin biosynthesis protein CobD (294 aa).

The next 4 helical transmembrane spans lie at 52 to 72, 73 to 93, 145 to 165, and 268 to 288; these read AGLL…IVPF, YAPF…SFAI, DSVV…AVIY, and IYWL…ATGV.

It belongs to the CobD/CbiB family.

The protein localises to the cell membrane. It functions in the pathway cofactor biosynthesis; adenosylcobalamin biosynthesis. Functionally, converts cobyric acid to cobinamide by the addition of aminopropanol on the F carboxylic group. The sequence is that of Probable cobalamin biosynthesis protein CobD from Thermococcus kodakarensis (strain ATCC BAA-918 / JCM 12380 / KOD1) (Pyrococcus kodakaraensis (strain KOD1)).